Consider the following 484-residue polypeptide: GTPase Obg (484 aa).

One can recognise an Obg domain in the interval 7–164 (PRFVDRVVIH…RDLTLELKTV (158 aa)). A disordered region spans residues 21–43 (SGGNGCASVHREKFKPLGGPDGG). Positions 165 to 345 (ADVGLVGFPS…LIFGLSQMIS (181 aa)) constitute an OBG-type G domain. GTP contacts are provided by residues 171–178 (GFPSAGKS), 196–200 (FTTLV), 217–220 (DVPG), 297–300 (NKID), and 326–328 (STA). Positions 178 and 198 each coordinate Mg(2+). The OCT domain maps to 363–441 (PIPVDDSGFT…IGEMTFDWEP (79 aa)). The tract at residues 439–484 (WEPQTPAGEPVAMSGRGTDPRLDSNKRVGAAERKAARSRRREHGDG) is disordered. Residues 456–473 (TDPRLDSNKRVGAAERKA) are compositionally biased toward basic and acidic residues. Residues 474–484 (ARSRRREHGDG) are compositionally biased toward basic residues.

It belongs to the TRAFAC class OBG-HflX-like GTPase superfamily. OBG GTPase family. Monomer. Requires Mg(2+) as cofactor.

The protein localises to the cytoplasm. Its function is as follows. An essential GTPase which binds GTP, GDP and possibly (p)ppGpp with moderate affinity, with high nucleotide exchange rates and a fairly low GTP hydrolysis rate. Plays a role in control of the cell cycle, stress response, ribosome biogenesis and in those bacteria that undergo differentiation, in morphogenesis control. The protein is GTPase Obg of Mycobacterium tuberculosis (strain CDC 1551 / Oshkosh).